A 546-amino-acid chain; its full sequence is Membrane protein insertase YidC (546 aa).

Residues 6 to 26 form a helical membrane-spanning segment; it reads NLLLIALLFVSFMIWQAWQVD. The segment covering 30 to 44 has biased composition (low complexity); that stretch reads QPTAQTTQQTTNTAT. Residues 30–55 form a disordered region; the sequence is QPTAQTTQQTTNTATGDKASQAVPGS. A run of 4 helical transmembrane segments spans residues 344–364, 419–439, 457–477, and 498–518; these read KFIHSFVGNWGFSIIVITFIV, LGGCLPLIIQMPIFLALYYML, LSAQDPYYILPILMGITMYFI, and PVIFTVFFLWFPAGLVLYYIV.

Belongs to the OXA1/ALB3/YidC family. Type 1 subfamily. Interacts with the Sec translocase complex via SecD. Specifically interacts with transmembrane segments of nascent integral membrane proteins during membrane integration.

Its subcellular location is the cell inner membrane. Functionally, required for the insertion and/or proper folding and/or complex formation of integral membrane proteins into the membrane. Involved in integration of membrane proteins that insert both dependently and independently of the Sec translocase complex, as well as at least some lipoproteins. Aids folding of multispanning membrane proteins. This is Membrane protein insertase YidC from Yersinia pestis.